Reading from the N-terminus, the 379-residue chain is Protein RecA (379 aa).

The disordered stretch occupies residues 1 to 23 (MSVDVKSAQSSKSDSLQVEPRPG). Polar residues predominate over residues 7–16 (SAQSSKSDSL). An ATP-binding site is contributed by 84-91 (GPESSGKT).

The protein belongs to the RecA family.

Its subcellular location is the cytoplasm. In terms of biological role, can catalyze the hydrolysis of ATP in the presence of single-stranded DNA, the ATP-dependent uptake of single-stranded DNA by duplex DNA, and the ATP-dependent hybridization of homologous single-stranded DNAs. It interacts with LexA causing its activation and leading to its autocatalytic cleavage. This is Protein RecA from Prochlorococcus marinus (strain MIT 9313).